We begin with the raw amino-acid sequence, 317 residues long: tRNA uridine(34) hydroxylase (317 aa).

Residues 129 to 223 (TDPEVLLIDT…YLEEVPEQES (95 aa)) form the Rhodanese domain. Cysteine 183 (cysteine persulfide intermediate) is an active-site residue. The interval 298–317 (AKARNQPHPIGRNYRLPSEA) is disordered.

This sequence belongs to the TrhO family.

The catalysed reaction is uridine(34) in tRNA + AH2 + O2 = 5-hydroxyuridine(34) in tRNA + A + H2O. Catalyzes oxygen-dependent 5-hydroxyuridine (ho5U) modification at position 34 in tRNAs. The sequence is that of tRNA uridine(34) hydroxylase from Pseudomonas syringae pv. tomato (strain ATCC BAA-871 / DC3000).